The chain runs to 220 residues: ATP phosphoribosyltransferase (220 aa).

It belongs to the ATP phosphoribosyltransferase family. Short subfamily. In terms of assembly, heteromultimer composed of HisG and HisZ subunits.

It localises to the cytoplasm. It carries out the reaction 1-(5-phospho-beta-D-ribosyl)-ATP + diphosphate = 5-phospho-alpha-D-ribose 1-diphosphate + ATP. The protein operates within amino-acid biosynthesis; L-histidine biosynthesis; L-histidine from 5-phospho-alpha-D-ribose 1-diphosphate: step 1/9. Catalyzes the condensation of ATP and 5-phosphoribose 1-diphosphate to form N'-(5'-phosphoribosyl)-ATP (PR-ATP). Has a crucial role in the pathway because the rate of histidine biosynthesis seems to be controlled primarily by regulation of HisG enzymatic activity. This Anaeromyxobacter sp. (strain Fw109-5) protein is ATP phosphoribosyltransferase.